A 214-amino-acid chain; its full sequence is Cytochrome c biogenesis ATP-binding export protein CcmA (214 aa).

The ABC transporter domain occupies 4–214; it reads LAVDQLTVSR…FDHGFDGAFL (211 aa). 36–43 is a binding site for ATP; it reads GPNGIGKT.

This sequence belongs to the ABC transporter superfamily. CcmA exporter (TC 3.A.1.107) family. As to quaternary structure, the complex is composed of two ATP-binding proteins (CcmA) and two transmembrane proteins (CcmB).

The protein resides in the cell inner membrane. The enzyme catalyses heme b(in) + ATP + H2O = heme b(out) + ADP + phosphate + H(+). In terms of biological role, part of the ABC transporter complex CcmAB involved in the biogenesis of c-type cytochromes; once thought to export heme, this seems not to be the case, but its exact role is uncertain. Responsible for energy coupling to the transport system. The polypeptide is Cytochrome c biogenesis ATP-binding export protein CcmA (Rhodobacter capsulatus (strain ATCC BAA-309 / NBRC 16581 / SB1003)).